Here is a 418-residue protein sequence, read N- to C-terminus: Serine hydroxymethyltransferase (418 aa).

(6S)-5,6,7,8-tetrahydrofolate is bound by residues leucine 121 and 125 to 127 (GHL). Lysine 230 bears the N6-(pyridoxal phosphate)lysine mark. (6S)-5,6,7,8-tetrahydrofolate is bound at residue 356-358 (SPF).

It belongs to the SHMT family. Homodimer. It depends on pyridoxal 5'-phosphate as a cofactor.

Its subcellular location is the cytoplasm. The catalysed reaction is (6R)-5,10-methylene-5,6,7,8-tetrahydrofolate + glycine + H2O = (6S)-5,6,7,8-tetrahydrofolate + L-serine. It participates in one-carbon metabolism; tetrahydrofolate interconversion. The protein operates within amino-acid biosynthesis; glycine biosynthesis; glycine from L-serine: step 1/1. Catalyzes the reversible interconversion of serine and glycine with tetrahydrofolate (THF) serving as the one-carbon carrier. This reaction serves as the major source of one-carbon groups required for the biosynthesis of purines, thymidylate, methionine, and other important biomolecules. Also exhibits THF-independent aldolase activity toward beta-hydroxyamino acids, producing glycine and aldehydes, via a retro-aldol mechanism. This Shewanella pealeana (strain ATCC 700345 / ANG-SQ1) protein is Serine hydroxymethyltransferase.